A 199-amino-acid polypeptide reads, in one-letter code: Protein P1 (199 aa).

This chain is Protein P1, found in Rice tungro bacilliform virus (isolate Philippines) (RTBV).